Consider the following 146-residue polypeptide: 3-hydroxyacyl-[acyl-carrier-protein] dehydratase FabZ (146 aa).

Residue His47 is part of the active site.

It belongs to the thioester dehydratase family. FabZ subfamily.

It localises to the cytoplasm. The enzyme catalyses a (3R)-hydroxyacyl-[ACP] = a (2E)-enoyl-[ACP] + H2O. In terms of biological role, involved in unsaturated fatty acids biosynthesis. Catalyzes the dehydration of short chain beta-hydroxyacyl-ACPs and long chain saturated and unsaturated beta-hydroxyacyl-ACPs. The protein is 3-hydroxyacyl-[acyl-carrier-protein] dehydratase FabZ of Nitrosospira multiformis (strain ATCC 25196 / NCIMB 11849 / C 71).